The following is a 323-amino-acid chain: Pseudouridine-5'-phosphate glycosidase (323 aa).

E43 (proton donor) is an active-site residue. Substrate contacts are provided by K104 and V124. Mn(2+) is bound at residue D156. 158–160 (SAD) is a substrate binding site. K177 acts as the Nucleophile in catalysis.

Belongs to the pseudouridine-5'-phosphate glycosidase family. As to quaternary structure, homotrimer. Mn(2+) is required as a cofactor.

The catalysed reaction is D-ribose 5-phosphate + uracil = psi-UMP + H2O. In terms of biological role, catalyzes the reversible cleavage of pseudouridine 5'-phosphate (PsiMP) to ribose 5-phosphate and uracil. Functions biologically in the cleavage direction, as part of a pseudouridine degradation pathway. The polypeptide is Pseudouridine-5'-phosphate glycosidase (Streptomyces griseus subsp. griseus (strain JCM 4626 / CBS 651.72 / NBRC 13350 / KCC S-0626 / ISP 5235)).